Consider the following 675-residue polypeptide: Methionine--tRNA ligase (675 aa).

Residues 15–25 (PYANGPIHLGH) carry the 'HIGH' region motif. Zn(2+) is bound by residues cysteine 146, cysteine 149, cysteine 159, and cysteine 162. The 'KMSKS' region motif lies at 332 to 336 (KMSKS). Lysine 335 serves as a coordination point for ATP. Residues 573–675 (DFAKVDMRVA…SGAQPGMQVK (103 aa)) form the tRNA-binding domain.

It belongs to the class-I aminoacyl-tRNA synthetase family. MetG type 1 subfamily. Homodimer. Zn(2+) is required as a cofactor.

The protein localises to the cytoplasm. The catalysed reaction is tRNA(Met) + L-methionine + ATP = L-methionyl-tRNA(Met) + AMP + diphosphate. Functionally, is required not only for elongation of protein synthesis but also for the initiation of all mRNA translation through initiator tRNA(fMet) aminoacylation. This is Methionine--tRNA ligase from Photorhabdus laumondii subsp. laumondii (strain DSM 15139 / CIP 105565 / TT01) (Photorhabdus luminescens subsp. laumondii).